A 506-amino-acid polypeptide reads, in one-letter code: Cobyric acid synthase (506 aa).

The 198-residue stretch at 251–448 (DIDIAVVQVP…LHGLFDSDAF (198 aa)) folds into the GATase cobBQ-type domain. Cysteine 332 acts as the Nucleophile in catalysis. Histidine 440 is a catalytic residue.

The protein belongs to the CobB/CobQ family. CobQ subfamily.

Its pathway is cofactor biosynthesis; adenosylcobalamin biosynthesis. In terms of biological role, catalyzes amidations at positions B, D, E, and G on adenosylcobyrinic A,C-diamide. NH(2) groups are provided by glutamine, and one molecule of ATP is hydrogenolyzed for each amidation. This is Cobyric acid synthase from Citrobacter koseri (strain ATCC BAA-895 / CDC 4225-83 / SGSC4696).